Here is a 98-residue protein sequence, read N- to C-terminus: NADH-ubiquinone oxidoreductase chain 4L (98 aa).

The next 3 membrane-spanning stretches (helical) occupy residues 1 to 21 (MSPV…GLAF), 26 to 46 (LLSA…AIAL), and 61 to 81 (MILL…LVAA).

Belongs to the complex I subunit 4L family.

It localises to the mitochondrion membrane. It catalyses the reaction a ubiquinone + NADH + 5 H(+)(in) = a ubiquinol + NAD(+) + 4 H(+)(out). In terms of biological role, core subunit of the mitochondrial membrane respiratory chain NADH dehydrogenase (Complex I) which catalyzes electron transfer from NADH through the respiratory chain, using ubiquinone as an electron acceptor. Part of the enzyme membrane arm which is embedded in the lipid bilayer and involved in proton translocation. This Squalus acanthias (Spiny dogfish) protein is NADH-ubiquinone oxidoreductase chain 4L (MT-ND4L).